Here is a 211-residue protein sequence, read N- to C-terminus: Imidazole glycerol phosphate synthase subunit HisH (211 aa).

Residues 1–211 form the Glutamine amidotransferase type-1 domain; it reads MIGIIDYGMG…ASIIEGKGSM (211 aa). The active-site Nucleophile is the C79. Catalysis depends on residues H186 and E188.

In terms of assembly, heterodimer of HisH and HisF.

The protein resides in the cytoplasm. The enzyme catalyses 5-[(5-phospho-1-deoxy-D-ribulos-1-ylimino)methylamino]-1-(5-phospho-beta-D-ribosyl)imidazole-4-carboxamide + L-glutamine = D-erythro-1-(imidazol-4-yl)glycerol 3-phosphate + 5-amino-1-(5-phospho-beta-D-ribosyl)imidazole-4-carboxamide + L-glutamate + H(+). It carries out the reaction L-glutamine + H2O = L-glutamate + NH4(+). The protein operates within amino-acid biosynthesis; L-histidine biosynthesis; L-histidine from 5-phospho-alpha-D-ribose 1-diphosphate: step 5/9. IGPS catalyzes the conversion of PRFAR and glutamine to IGP, AICAR and glutamate. The HisH subunit catalyzes the hydrolysis of glutamine to glutamate and ammonia as part of the synthesis of IGP and AICAR. The resulting ammonia molecule is channeled to the active site of HisF. In Geobacillus sp. (strain WCH70), this protein is Imidazole glycerol phosphate synthase subunit HisH.